We begin with the raw amino-acid sequence, 256 residues long: Thiazole synthase (256 aa).

Lys-95 (schiff-base intermediate with DXP) is an active-site residue. 1-deoxy-D-xylulose 5-phosphate contacts are provided by residues Gly-156, 182–183 (AG), and 204–205 (NT).

This sequence belongs to the ThiG family. Homotetramer. Forms heterodimers with either ThiH or ThiS.

The protein localises to the cytoplasm. The catalysed reaction is [ThiS sulfur-carrier protein]-C-terminal-Gly-aminoethanethioate + 2-iminoacetate + 1-deoxy-D-xylulose 5-phosphate = [ThiS sulfur-carrier protein]-C-terminal Gly-Gly + 2-[(2R,5Z)-2-carboxy-4-methylthiazol-5(2H)-ylidene]ethyl phosphate + 2 H2O + H(+). It participates in cofactor biosynthesis; thiamine diphosphate biosynthesis. In terms of biological role, catalyzes the rearrangement of 1-deoxy-D-xylulose 5-phosphate (DXP) to produce the thiazole phosphate moiety of thiamine. Sulfur is provided by the thiocarboxylate moiety of the carrier protein ThiS. In vitro, sulfur can be provided by H(2)S. This is Thiazole synthase from Escherichia fergusonii (strain ATCC 35469 / DSM 13698 / CCUG 18766 / IAM 14443 / JCM 21226 / LMG 7866 / NBRC 102419 / NCTC 12128 / CDC 0568-73).